Here is an 890-residue protein sequence, read N- to C-terminus: Translation initiation factor IF-2 (890 aa).

The segment at 45 to 304 is disordered; it reads LIDHLNQKNS…LQQGFQKPAQ (260 aa). Residues 67-81 are compositionally biased toward polar residues; that stretch reads STLNIPGTGGKSKSV. The span at 92–217 shows a compositional bias: basic and acidic residues; that stretch reads VKRDPQEAER…RMAEENKWTD (126 aa). Basic residues predominate over residues 252 to 266; the sequence is GRGRNAKAARPKKGN. A compositionally biased stretch (basic and acidic residues) spans 267–280; that stretch reads KHAESKADREEARA. The tr-type G domain occupies 389–558; sequence PRAPVVTIMG…LLQAEVLELK (170 aa). A G1 region spans residues 398 to 405; it reads GHVDHGKT. 398 to 405 contributes to the GTP binding site; it reads GHVDHGKT. The segment at 423-427 is G2; it reads GITQH. The tract at residues 444-447 is G3; it reads DTPG. Residues 444 to 448 and 498 to 501 contribute to the GTP site; these read DTPGH and NKID. The G4 stretch occupies residues 498–501; the sequence is NKID. The segment at 534 to 536 is G5; the sequence is SAK. At Lys-808 the chain carries N6-acetyllysine.

This sequence belongs to the TRAFAC class translation factor GTPase superfamily. Classic translation factor GTPase family. IF-2 subfamily.

The protein resides in the cytoplasm. One of the essential components for the initiation of protein synthesis. Protects formylmethionyl-tRNA from spontaneous hydrolysis and promotes its binding to the 30S ribosomal subunits. Also involved in the hydrolysis of GTP during the formation of the 70S ribosomal complex. In Escherichia coli (strain SMS-3-5 / SECEC), this protein is Translation initiation factor IF-2.